Reading from the N-terminus, the 489-residue chain is NF-kappa-B inhibitor cactus (489 aa).

The segment covering 1–26 (MPSPTKAAEAATKATATSDCSCSAAS) has biased composition (low complexity). Disordered regions lie at residues 1–138 (MPSP…SMRL) and 163–203 (NNLG…APPS). Ser45 carries the phosphoserine; by PKC modification. Residues 69 to 86 (NETSDSGFISGPQSSQIC) show a composition bias toward polar residues. Ser135 bears the Phosphoserine; by PKC mark. Over residues 163-180 (NNLGQSSSTQITGRSKFQ) the composition is skewed to polar residues. A Phosphothreonine; by PKC modification is found at Thr174. Residues 181-203 (SSTASTANANPSGXGATSSAPPS) show a composition bias toward low complexity. ANK repeat units lie at residues 220-252 (DGDT…LLNI), 256-285 (VAQT…EVRD), 287-316 (HGNT…ATEI), 350-379 (DGER…DINA), and 384-413 (SGRT…KLNL). Thr308 is subject to Phosphothreonine; by PKC. Position 384 is a phosphoserine; by PKC (Ser384).

It is found in the cytoplasm. In terms of biological role, involved in the formation of the dorsoventral pattern. It inhibits nuclear translocation of the dorsal morphogen in the dorsal region of the embryo. The protein is NF-kappa-B inhibitor cactus (cact) of Drosophila yakuba (Fruit fly).